Reading from the N-terminus, the 345-residue chain is S-adenosylmethionine:tRNA ribosyltransferase-isomerase (345 aa).

The protein belongs to the QueA family. Monomer.

It localises to the cytoplasm. It carries out the reaction 7-aminomethyl-7-carbaguanosine(34) in tRNA + S-adenosyl-L-methionine = epoxyqueuosine(34) in tRNA + adenine + L-methionine + 2 H(+). It participates in tRNA modification; tRNA-queuosine biosynthesis. Functionally, transfers and isomerizes the ribose moiety from AdoMet to the 7-aminomethyl group of 7-deazaguanine (preQ1-tRNA) to give epoxyqueuosine (oQ-tRNA). The chain is S-adenosylmethionine:tRNA ribosyltransferase-isomerase from Shewanella baltica (strain OS185).